A 267-amino-acid chain; its full sequence is 3-isopropylmalate dehydratase large subunit (267 aa).

Residues C146, C206, and C209 each coordinate [4Fe-4S] cluster.

This sequence belongs to the aconitase/IPM isomerase family. LeuC type 1 subfamily. In terms of assembly, heterodimer of LeuC and LeuD. The cofactor is [4Fe-4S] cluster.

The catalysed reaction is (2R,3S)-3-isopropylmalate = (2S)-2-isopropylmalate. It functions in the pathway amino-acid biosynthesis; L-leucine biosynthesis; L-leucine from 3-methyl-2-oxobutanoate: step 2/4. Catalyzes the isomerization between 2-isopropylmalate and 3-isopropylmalate, via the formation of 2-isopropylmaleate. In Cupriavidus necator (Alcaligenes eutrophus), this protein is 3-isopropylmalate dehydratase large subunit (leuC).